The following is a 502-amino-acid chain: Sporulation-specific protein 2 (502 aa).

The N-terminal stretch at Met-1–Ala-56 is a signal peptide. Asn-77, Asn-135, Asn-285, Asn-303, Asn-340, Asn-343, and Asn-355 each carry an N-linked (GlcNAc...) asparagine glycan. The segment at Glu-441–Glu-474 is disordered. Basic and acidic residues predominate over residues Gln-448 to Lys-461. The GPI-anchor amidated asparagine moiety is linked to residue Asn-475. Positions Ser-476–Phe-502 are cleaved as a propeptide — removed in mature form.

The protein belongs to the SPS2 family.

The protein localises to the cell membrane. Involved in middle stages of meiosis. Redundant with SPS22 for the organization of the beta-glucan layer of the spore wall. The chain is Sporulation-specific protein 2 (SPS2) from Saccharomyces cerevisiae (strain ATCC 204508 / S288c) (Baker's yeast).